A 495-amino-acid polypeptide reads, in one-letter code: Glycerol kinase (495 aa).

T13 contacts ADP. Positions 13, 14, and 15 each coordinate ATP. T13 contributes to the sn-glycerol 3-phosphate binding site. R17 is an ADP binding site. Sn-glycerol 3-phosphate contacts are provided by R83, E84, Y135, and D244. The glycerol site is built by R83, E84, Y135, D244, and Q245. ADP is bound by residues T266 and G309. ATP is bound by residues T266, G309, Q313, and G410. ADP is bound by residues G410 and N414.

This sequence belongs to the FGGY kinase family.

It catalyses the reaction glycerol + ATP = sn-glycerol 3-phosphate + ADP + H(+). It participates in polyol metabolism; glycerol degradation via glycerol kinase pathway; sn-glycerol 3-phosphate from glycerol: step 1/1. Its activity is regulated as follows. Inhibited by fructose 1,6-bisphosphate (FBP). Key enzyme in the regulation of glycerol uptake and metabolism. Catalyzes the phosphorylation of glycerol to yield sn-glycerol 3-phosphate. This Shewanella amazonensis (strain ATCC BAA-1098 / SB2B) protein is Glycerol kinase.